Here is a 100-residue protein sequence, read N- to C-terminus: Aspartyl/glutamyl-tRNA(Asn/Gln) amidotransferase subunit C (100 aa).

Belongs to the GatC family. As to quaternary structure, heterotrimer of A, B and C subunits.

It carries out the reaction L-glutamyl-tRNA(Gln) + L-glutamine + ATP + H2O = L-glutaminyl-tRNA(Gln) + L-glutamate + ADP + phosphate + H(+). It catalyses the reaction L-aspartyl-tRNA(Asn) + L-glutamine + ATP + H2O = L-asparaginyl-tRNA(Asn) + L-glutamate + ADP + phosphate + 2 H(+). Functionally, allows the formation of correctly charged Asn-tRNA(Asn) or Gln-tRNA(Gln) through the transamidation of misacylated Asp-tRNA(Asn) or Glu-tRNA(Gln) in organisms which lack either or both of asparaginyl-tRNA or glutaminyl-tRNA synthetases. The reaction takes place in the presence of glutamine and ATP through an activated phospho-Asp-tRNA(Asn) or phospho-Glu-tRNA(Gln). In Rickettsia rickettsii (strain Sheila Smith), this protein is Aspartyl/glutamyl-tRNA(Asn/Gln) amidotransferase subunit C.